The following is a 697-amino-acid chain: Choline transporter-like protein 2 (697 aa).

The Cytoplasmic portion of the chain corresponds to 1–30 (MDMEEKPKYGEPRKFDPSFKGPIQNRGCTD). Residues 31 to 51 (IVCCIIFIIAILGYLAVGILA) form a helical membrane-spanning segment. Residues 52–226 (WTHGDPRKVI…KIFEDYTKSW (175 aa)) lie on the Extracellular side of the membrane. N-linked (GlcNAc...) asparagine glycosylation is found at Asn-113 and Asn-204. The helical transmembrane segment at 227–247 (YWILICLLIAVVLSLIFIVLL) threads the bilayer. Topologically, residues 248 to 249 (RF) are cytoplasmic. The chain crosses the membrane as a helical span at residues 250–270 (LAGVMVWVMILMVVAVIAYGI). Over 271–309 (AHCSIKYVSLKDTPGSNITLQQLGFQPDFAVYLHIRQTW) the chain is Extracellular. N-linked (GlcNAc...) asparagine glycosylation occurs at Asn-287. Residues 310–330 (LAFIIILAILELIIILLLIFL) form a helical membrane-spanning segment. At 331–353 (RNRIRVAVELMKEASRAIGYVMS) the chain is on the cytoplasmic side. A helical membrane pass occupies residues 354-374 (SLVFPIFTFFLLAIVIAFWGV). Residues 375–435 (NAVFLSTSSE…YGGETPYHKY (61 aa)) are Extracellular-facing. N-linked (GlcNAc...) asparagine glycans are attached at residues Asn-391 and Asn-406. Residues 436–456 (LILLQFYNVFLFFWCANFVTA) traverse the membrane as a helical segment. Topologically, residues 457-498 (LGQMTLAGAFASYYWAFDKSKDMPAFPLCASLGRSLRYHTGS) are cytoplasmic. The helical transmembrane segment at 499 to 519 (LAFGSLLLAIVQVIRVLLEYI) threads the bilayer. Over 520-593 (DHKLKGAENK…RVVVLDKVTD (74 aa)) the chain is Extracellular. The helical transmembrane segment at 594 to 614 (FILFLGKLLIVGLVGIFAFFF) threads the bilayer. The Cytoplasmic segment spans residues 615-632 (FSGQTDAFKGTAPSLHYY). Residues 633 to 653 (WVPILTVLVCSYLIAHGFFSV) traverse the membrane as a helical segment. The Extracellular segment spans residues 654–697 (YAMCVDTLFLCFLEDLERNDGSAERPYLMSENLLNVLKKKNQAN).

Belongs to the CTL (choline transporter-like) family.

It localises to the cell membrane. The protein resides in the mitochondrion outer membrane. It catalyses the reaction choline(out) + n H(+)(in) = choline(in) + n H(+)(out). The enzyme catalyses ethanolamine(out) + n H(+)(in) = ethanolamine(in) + n H(+)(out). Functionally, choline/H+ antiporter, mainly in mitochodria. Also acts as a low-affinity ethanolamine/H+ antiporter, regulating the supply of extracellular ethanolamine (Etn) for the CDP-Etn pathway, redistribute intracellular Etn and balance the CDP-Cho and CDP-Etn arms of the Kennedy pathway. This Danio rerio (Zebrafish) protein is Choline transporter-like protein 2 (slc44a2).